The sequence spans 314 residues: Palmitoyl-protein thioesterase 1 (314 aa).

An N-terminal signal peptide occupies residues 1–25; it reads MISICCSRFSCILFLLFLIFSLVLS. 3 disulfides stabilise this stretch: Cys53/Cys54, Cys104/Cys136, and Cys160/Cys168. Ser123 (nucleophile) is an active-site residue. N-linked (GlcNAc...) asparagine glycosylation occurs at Asn240. Residues Asp241 and His295 contribute to the active site.

This sequence belongs to the palmitoyl-protein thioesterase family. In terms of tissue distribution, ubiquitously expressed.

It is found in the lysosome. The enzyme catalyses S-hexadecanoyl-L-cysteinyl-[protein] + H2O = L-cysteinyl-[protein] + hexadecanoate + H(+). Cleaves thioester-linked long fatty acyl groups such as palmitate from modified cysteine residues in proteins or peptides. In Drosophila melanogaster (Fruit fly), this protein is Palmitoyl-protein thioesterase 1 (Ppt1).